We begin with the raw amino-acid sequence, 237 residues long: Ribosomal RNA small subunit methyltransferase G (237 aa).

S-adenosyl-L-methionine-binding positions include Gly78, Phe83, 129-130 (AE), and Arg148.

Belongs to the methyltransferase superfamily. RNA methyltransferase RsmG family.

It localises to the cytoplasm. Its function is as follows. Specifically methylates the N7 position of a guanine in 16S rRNA. The polypeptide is Ribosomal RNA small subunit methyltransferase G (Streptococcus pyogenes serotype M1).